The following is a 483-amino-acid chain: UDP-N-acetylmuramoyl-L-alanyl-D-glutamate--L-lysine ligase (483 aa).

Ser-44 provides a ligand contact to UDP-N-acetyl-alpha-D-muramoyl-L-alanyl-D-glutamate. ATP is bound at residue 120–126; it reads GTKGKTT. UDP-N-acetyl-alpha-D-muramoyl-L-alanyl-D-glutamate is bound by residues 162 to 163, Ser-189, and Arg-197; that span reads TT. Position 231 is an N6-carboxylysine (Lys-231). Residues 406-409 carry the L-lysine recognition motif motif; that stretch reads DDPN.

The protein belongs to the MurCDEF family. MurE subfamily. Carboxylation is probably crucial for Mg(2+) binding and, consequently, for the gamma-phosphate positioning of ATP.

The protein localises to the cytoplasm. It carries out the reaction UDP-N-acetyl-alpha-D-muramoyl-L-alanyl-D-glutamate + L-lysine + ATP = UDP-N-acetyl-alpha-D-muramoyl-L-alanyl-gamma-D-glutamyl-L-lysine + ADP + phosphate + H(+). It functions in the pathway cell wall biogenesis; peptidoglycan biosynthesis. Its function is as follows. Catalyzes the addition of L-lysine to the nucleotide precursor UDP-N-acetylmuramoyl-L-alanyl-D-glutamate (UMAG) in the biosynthesis of bacterial cell-wall peptidoglycan. This is UDP-N-acetylmuramoyl-L-alanyl-D-glutamate--L-lysine ligase from Streptococcus mutans serotype c (strain ATCC 700610 / UA159).